A 91-amino-acid polypeptide reads, in one-letter code: Small ribosomal subunit protein uS15 (91 aa).

This sequence belongs to the universal ribosomal protein uS15 family. In terms of assembly, part of the 30S ribosomal subunit. Forms a bridge to the 50S subunit in the 70S ribosome, contacting the 23S rRNA.

In terms of biological role, one of the primary rRNA binding proteins, it binds directly to 16S rRNA where it helps nucleate assembly of the platform of the 30S subunit by binding and bridging several RNA helices of the 16S rRNA. Functionally, forms an intersubunit bridge (bridge B4) with the 23S rRNA of the 50S subunit in the ribosome. This chain is Small ribosomal subunit protein uS15, found in Deinococcus radiodurans (strain ATCC 13939 / DSM 20539 / JCM 16871 / CCUG 27074 / LMG 4051 / NBRC 15346 / NCIMB 9279 / VKM B-1422 / R1).